The following is a 308-amino-acid chain: tRNA dimethylallyltransferase (308 aa).

Residue 10–17 participates in ATP binding; that stretch reads GPTASGKT. 12 to 17 is a substrate binding site; the sequence is TASGKT. 2 interaction with substrate tRNA regions span residues 35 to 38 and 159 to 163; these read DSSL and QRIFR.

Belongs to the IPP transferase family. In terms of assembly, monomer. It depends on Mg(2+) as a cofactor.

The catalysed reaction is adenosine(37) in tRNA + dimethylallyl diphosphate = N(6)-dimethylallyladenosine(37) in tRNA + diphosphate. Its function is as follows. Catalyzes the transfer of a dimethylallyl group onto the adenine at position 37 in tRNAs that read codons beginning with uridine, leading to the formation of N6-(dimethylallyl)adenosine (i(6)A). This Francisella tularensis subsp. novicida (strain U112) protein is tRNA dimethylallyltransferase.